We begin with the raw amino-acid sequence, 321 residues long: Aspartate carbamoyltransferase catalytic subunit (321 aa).

The carbamoyl phosphate site is built by Arg-65 and Thr-66. Lys-93 contributes to the L-aspartate binding site. Residues Arg-115, His-143, and Gln-146 each contribute to the carbamoyl phosphate site. L-aspartate-binding residues include Arg-176 and Arg-230. Carbamoyl phosphate contacts are provided by Gly-271 and Pro-272.

It belongs to the aspartate/ornithine carbamoyltransferase superfamily. ATCase family. Heterododecamer (2C3:3R2) of six catalytic PyrB chains organized as two trimers (C3), and six regulatory PyrI chains organized as three dimers (R2).

The enzyme catalyses carbamoyl phosphate + L-aspartate = N-carbamoyl-L-aspartate + phosphate + H(+). It participates in pyrimidine metabolism; UMP biosynthesis via de novo pathway; (S)-dihydroorotate from bicarbonate: step 2/3. Its function is as follows. Catalyzes the condensation of carbamoyl phosphate and aspartate to form carbamoyl aspartate and inorganic phosphate, the committed step in the de novo pyrimidine nucleotide biosynthesis pathway. This is Aspartate carbamoyltransferase catalytic subunit from Bartonella quintana (strain Toulouse) (Rochalimaea quintana).